The sequence spans 927 residues: Echinoderm microtubule-associated protein-like 4 (927 aa).

A microtubule-binding region spans residues 1–189 (MDGFAGSLDD…IPSDVENYDD (189 aa)). Residues 14-63 (AASTSDVQDRLSALELRVQQQEDEITVLKAALADVLRRLAISEDQVATVR) are a coiled coil. A disordered region spans residues 85 to 132 (NGGAGTRKPSHASSVAKKDTLSSAAKSVKRSSTLEKSHNSWDASEESR). The segment covering 116–132 (STLEKSHNSWDASEESR) has biased composition (basic and acidic residues). 13 WD repeats span residues 199-237 (LKLEWVFGYRGRDCRANVYLLPTGEIVYFIASVVVLFNY), 241-288 (TQRH…VWDS), 296-336 (VIGL…VWDW), 343-378 (AEIKTTNEVVLAVEFHPTDAGTIVTCGKSHIFFWTW), 385-424 (RKQGIFGKYEKPKFVQCLAFLANGDVLAGDSGGIMLIWSK), 442-480 (QISKQIKAHDGSVFTLCQMRNGMLLTGGGKDRKVIMWDH), 485-521 (EREIEVPDQYGTIRAVAEGKGDQFLVGTSRNFILRGT), 524-563 (DGFQVEVQGHTDELWGLATHPFKDLLLTCAQDKQVCLWNS), 567-604 (SLEWTRVLDEPGHCADFHPTGTVVAIGTHSGRWFVLDA), 610-646 (VSIHTDGNEQLSVMRYSVDGALLAVGSHDNFIYLYNV), 653-692 (YSRYGKCTGHSSYITHLDWSPDNQYIMSNSGDYEILYWDI), 702-760 (RSEC…LFQY), and 767-806 (APSHKYSAHSSHVTNVSFTHNDGHLISTGGKDMSIMQWRL). The span at 815 to 829 (NDNIAESSSAVNSPV) shows a compositional bias: polar residues. Residues 815-927 (NDNIAESSSA…NQDDDDAPLS (113 aa)) are disordered. Residues 914–927 (AQDENQDDDDAPLS) show a composition bias toward acidic residues.

The protein belongs to the WD repeat EMAP family. Homotrimer; self-association is mediated by the N-terminal coiled coil.

The protein resides in the cytoplasm. It is found in the cytoskeleton. The protein localises to the spindle. It localises to the microtubule organizing center. Its subcellular location is the midbody. Functionally, essential for the formation and stability of microtubules (MTs). Required for the organization of the mitotic spindle and for the proper attachment of kinetochores to MTs. Promotes the recruitment of NUDC to the mitotic spindle for mitotic progression. In Xenopus laevis (African clawed frog), this protein is Echinoderm microtubule-associated protein-like 4 (eml4).